The chain runs to 100 residues: Urease subunit gamma (100 aa).

It belongs to the urease gamma subunit family. In terms of assembly, heterotrimer of UreA (gamma), UreB (beta) and UreC (alpha) subunits. Three heterotrimers associate to form the active enzyme.

It is found in the cytoplasm. It carries out the reaction urea + 2 H2O + H(+) = hydrogencarbonate + 2 NH4(+). Its pathway is nitrogen metabolism; urea degradation; CO(2) and NH(3) from urea (urease route): step 1/1. The polypeptide is Urease subunit gamma (Cyanothece sp. (strain PCC 7425 / ATCC 29141)).